The following is a 276-amino-acid chain: 2,3,4,5-tetrahydropyridine-2,6-dicarboxylate N-succinyltransferase (276 aa).

Residues R104 and D141 each coordinate substrate.

This sequence belongs to the transferase hexapeptide repeat family. Homotrimer.

Its subcellular location is the cytoplasm. The catalysed reaction is (S)-2,3,4,5-tetrahydrodipicolinate + succinyl-CoA + H2O = (S)-2-succinylamino-6-oxoheptanedioate + CoA. It functions in the pathway amino-acid biosynthesis; L-lysine biosynthesis via DAP pathway; LL-2,6-diaminopimelate from (S)-tetrahydrodipicolinate (succinylase route): step 1/3. This chain is 2,3,4,5-tetrahydropyridine-2,6-dicarboxylate N-succinyltransferase, found in Legionella pneumophila (strain Paris).